The primary structure comprises 279 residues: DegV domain-containing protein lmo1863 (279 aa).

The DegV domain maps to 4 to 278 (IKIITDSTAG…TGAFAFMYYT (275 aa)). Residues serine 62 and serine 94 each contribute to the hexadecanoate site.

Its function is as follows. May bind long-chain fatty acids, such as palmitate, and may play a role in lipid transport or fatty acid metabolism. In Listeria monocytogenes serovar 1/2a (strain ATCC BAA-679 / EGD-e), this protein is DegV domain-containing protein lmo1863.